The primary structure comprises 717 residues: Glycine--tRNA ligase beta subunit (717 aa).

It belongs to the class-II aminoacyl-tRNA synthetase family. In terms of assembly, tetramer of two alpha and two beta subunits.

It localises to the cytoplasm. The catalysed reaction is tRNA(Gly) + glycine + ATP = glycyl-tRNA(Gly) + AMP + diphosphate. This Agrobacterium fabrum (strain C58 / ATCC 33970) (Agrobacterium tumefaciens (strain C58)) protein is Glycine--tRNA ligase beta subunit.